Here is a 368-residue protein sequence, read N- to C-terminus: MSILEKVQPIETMLPERYYTMSTEDMEKRVREIKEKMGETLFIPGHHYQKDEVVQFSDAAGDSLQLAQVAASNKEAKYIVFCGVHFMAETADMLTTDEQVVILPDMRAGCSMADMADIEQTERAWKELTKLFGDTMIPLTYVNSTAAIKAFCGRNGGATVTSSNAKQMVSWAFTQKERLVFLPDQHLGRNTAYDLGIPLDKMAVWDPHTDSLEYDGDIEEIQVILWKGHCSVHQNFTVKNIENVRKNHPDMNIIVHPECCYEVVAASDYAGSTKYIIDMIELAPSGSKWAIGTEMNLVNRIIQQHPDKEIVSLNPFMCPCLTMNRIDLPHLLWALETIERGEEINVISVDKQVTEEAVLALNRMLERV.

His-46 and Ser-63 together coordinate iminosuccinate. Cys-110 contributes to the [4Fe-4S] cluster binding site. Iminosuccinate contacts are provided by residues 141–143 and Ser-162; that span reads YVN. Cys-230 contributes to the [4Fe-4S] cluster binding site. Residues 256-258 and Thr-273 each bind iminosuccinate; that span reads HPE. Cys-320 provides a ligand contact to [4Fe-4S] cluster.

Belongs to the quinolinate synthase family. Type 3 subfamily. [4Fe-4S] cluster is required as a cofactor.

It is found in the cytoplasm. It carries out the reaction iminosuccinate + dihydroxyacetone phosphate = quinolinate + phosphate + 2 H2O + H(+). It participates in cofactor biosynthesis; NAD(+) biosynthesis; quinolinate from iminoaspartate: step 1/1. Catalyzes the condensation of iminoaspartate with dihydroxyacetone phosphate to form quinolinate. This chain is Quinolinate synthase, found in Bacillus thuringiensis (strain Al Hakam).